Reading from the N-terminus, the 360-residue chain is Heat-inducible transcription repressor HrcA (360 aa).

It belongs to the HrcA family.

In terms of biological role, negative regulator of class I heat shock genes (grpE-dnaK-dnaJ and groELS operons). Prevents heat-shock induction of these operons. In Streptococcus thermophilus (strain CNRZ 1066), this protein is Heat-inducible transcription repressor HrcA.